Reading from the N-terminus, the 739-residue chain is DNA ligase (739 aa).

Residue 34–38 (DADYD) participates in NAD(+) binding. Residues 49-59 (ARFPHLKRPDS) show a composition bias toward basic and acidic residues. Residues 49 to 70 (ARFPHLKRPDSPSEQVGARPGE) are disordered. NAD(+)-binding positions include 83–84 (SL) and Glu-117. Lys-119 (N6-AMP-lysine intermediate) is an active-site residue. Residues Arg-140, Glu-175, Lys-291, and Lys-315 each coordinate NAD(+). Cys-420, Cys-423, Cys-438, and Cys-444 together coordinate Zn(2+). A BRCT domain is found at 660-739 (ARDSPVAGKT…DGWLKLIEGL (80 aa)).

This sequence belongs to the NAD-dependent DNA ligase family. LigA subfamily. Mg(2+) is required as a cofactor. The cofactor is Mn(2+).

It catalyses the reaction NAD(+) + (deoxyribonucleotide)n-3'-hydroxyl + 5'-phospho-(deoxyribonucleotide)m = (deoxyribonucleotide)n+m + AMP + beta-nicotinamide D-nucleotide.. Functionally, DNA ligase that catalyzes the formation of phosphodiester linkages between 5'-phosphoryl and 3'-hydroxyl groups in double-stranded DNA using NAD as a coenzyme and as the energy source for the reaction. It is essential for DNA replication and repair of damaged DNA. In Ruegeria pomeroyi (strain ATCC 700808 / DSM 15171 / DSS-3) (Silicibacter pomeroyi), this protein is DNA ligase.